The following is a 60-amino-acid chain: MAVPRNRHSNARKNIRRSHHAKKARHAAVCNNCKQAFIPHTICTSCGFYNGKAVMTVEKK.

The segment at methionine 1 to lysine 23 is disordered.

This sequence belongs to the bacterial ribosomal protein bL32 family.

The sequence is that of Large ribosomal subunit protein bL32 from Chlamydia caviae (strain ATCC VR-813 / DSM 19441 / 03DC25 / GPIC) (Chlamydophila caviae).